A 949-amino-acid chain; its full sequence is Pyruvate, phosphate dikinase, chloroplastic (949 aa).

A chloroplast-targeting transit peptide spans 1–74 (MASAFKGILI…VMAPASDPTS (74 aa)). Position 530 is a phosphothreonine; by PDRP1 (threonine 530). The active-site Tele-phosphohistidine intermediate is the histidine 532. Substrate is bound by residues arginine 638, arginine 695, glutamate 824, glycine 845, threonine 846, asparagine 847, and aspartate 848. Glutamate 824 contacts Mg(2+). Aspartate 848 contributes to the Mg(2+) binding site. Cysteine 910 functions as the Proton donor in the catalytic mechanism.

This sequence belongs to the PEP-utilizing enzyme family. Homodimer. Requires Mg(2+) as cofactor. Post-translationally, phosphorylation of Thr-530 in the dark inactivates the enzyme. Dephosphorylation upon light stimulation reactivates the enzyme.

It localises to the plastid. The protein localises to the chloroplast. It carries out the reaction pyruvate + phosphate + ATP = phosphoenolpyruvate + AMP + diphosphate + H(+). With respect to regulation, activated by light-induced dephosphorylation. Inhibited by dark-induced phosphorylation. Both reactions are catalyzed by PDRP1. Formation of phosphoenolpyruvate, which is the primary acceptor of CO(2) in C4 and some Crassulacean acid metabolism plants. The protein is Pyruvate, phosphate dikinase, chloroplastic (PPD) of Mesembryanthemum crystallinum (Common ice plant).